Reading from the N-terminus, the 270-residue chain is Thiazole synthase (270 aa).

K112 serves as the catalytic Schiff-base intermediate with DXP. Residues G173, 199–200 (AG), and 221–222 (NS) each bind 1-deoxy-D-xylulose 5-phosphate.

It belongs to the ThiG family. In terms of assembly, homotetramer. Forms heterodimers with either ThiH or ThiS.

It localises to the cytoplasm. The catalysed reaction is [ThiS sulfur-carrier protein]-C-terminal-Gly-aminoethanethioate + 2-iminoacetate + 1-deoxy-D-xylulose 5-phosphate = [ThiS sulfur-carrier protein]-C-terminal Gly-Gly + 2-[(2R,5Z)-2-carboxy-4-methylthiazol-5(2H)-ylidene]ethyl phosphate + 2 H2O + H(+). It participates in cofactor biosynthesis; thiamine diphosphate biosynthesis. Its function is as follows. Catalyzes the rearrangement of 1-deoxy-D-xylulose 5-phosphate (DXP) to produce the thiazole phosphate moiety of thiamine. Sulfur is provided by the thiocarboxylate moiety of the carrier protein ThiS. In vitro, sulfur can be provided by H(2)S. The protein is Thiazole synthase of Pseudomonas putida (strain ATCC 700007 / DSM 6899 / JCM 31910 / BCRC 17059 / LMG 24140 / F1).